The sequence spans 367 residues: Peptide chain release factor 2 (367 aa).

Gln254 carries the N5-methylglutamine modification.

This sequence belongs to the prokaryotic/mitochondrial release factor family. Methylated by PrmC. Methylation increases the termination efficiency of RF2.

It is found in the cytoplasm. Peptide chain release factor 2 directs the termination of translation in response to the peptide chain termination codons UGA and UAA. This chain is Peptide chain release factor 2, found in Neisseria gonorrhoeae (strain ATCC 700825 / FA 1090).